Reading from the N-terminus, the 178-residue chain is Large ribosomal subunit protein uL6 (178 aa).

This sequence belongs to the universal ribosomal protein uL6 family. Part of the 50S ribosomal subunit.

In terms of biological role, this protein binds to the 23S rRNA, and is important in its secondary structure. It is located near the subunit interface in the base of the L7/L12 stalk, and near the tRNA binding site of the peptidyltransferase center. The protein is Large ribosomal subunit protein uL6 of Lactococcus lactis subsp. cremoris (strain MG1363).